A 1060-amino-acid chain; its full sequence is Valine--tRNA ligase, mitochondrial (1060 aa).

Residues 1-15 (MPHLPLASFRPPLWG) constitute a mitochondrion transit peptide. A disordered region spans residues 25–50 (PQALCTQPEPHGSPVSRRNREAKQKR). The 'HIGH' region motif lies at 146 to 156 (PNVTGSLHIGH). K548 carries the post-translational modification N6-acetyllysine. Residues 659-663 (KMSKS) carry the 'KMSKS' region motif. K662 serves as a coordination point for ATP.

Belongs to the class-I aminoacyl-tRNA synthetase family.

It is found in the mitochondrion. It carries out the reaction tRNA(Val) + L-valine + ATP = L-valyl-tRNA(Val) + AMP + diphosphate. Functionally, catalyzes the attachment of valine to tRNA(Val) in a two-step reaction: valine is first activated by ATP to form Val-AMP and then transferred to the acceptor end of tRNA(Val). This chain is Valine--tRNA ligase, mitochondrial (Vars2), found in Mus musculus (Mouse).